Consider the following 512-residue polypeptide: Protein arginine N-methyltransferase 2 (512 aa).

The disordered stretch occupies residues 67–103; sequence TSNIDDLPLPPPIQEVEEEEPTQQNIEQQQQTQDESD. Over residues 88 to 99 the composition is skewed to low complexity; sequence TQQNIEQQQQTQ. One can recognise an SAM-dependent MTase PRMT-type domain in the interval 120 to 508; that stretch reads DEEYFSSYSK…KTNPFDYSYQ (389 aa). 4 residues coordinate S-adenosyl-L-methionine: His-133, Arg-142, Gly-166, and Glu-217. Active-site residues include Glu-231 and Glu-240. The disordered stretch occupies residues 375–395; sequence DDDDNDNNNNNNDNSNDDENK.

This sequence belongs to the class I-like SAM-binding methyltransferase superfamily. Protein arginine N-methyltransferase family.

Its subcellular location is the cytoplasm. It is found in the nucleus. It carries out the reaction L-arginyl-[protein] + 2 S-adenosyl-L-methionine = N(omega),N(omega)-dimethyl-L-arginyl-[protein] + 2 S-adenosyl-L-homocysteine + 2 H(+). Functionally, arginine methyltransferase that methylates the guanidino nitrogens of arginyl residues in some proteins such as histones. This is Protein arginine N-methyltransferase 2 (prmt2) from Dictyostelium discoideum (Social amoeba).